We begin with the raw amino-acid sequence, 53 residues long: uncharacterized protein (53 aa).

The first 23 residues, 1-23 (MSILLKILFKLLLLILSITFVIT), serve as a signal peptide directing secretion.

This is an uncharacterized protein from Acheta domesticus (House cricket).